We begin with the raw amino-acid sequence, 201 residues long: UPF0301 protein MSMEG_6921/MSMEI_6732 (201 aa).

It belongs to the UPF0301 (AlgH) family.

The sequence is that of UPF0301 protein MSMEG_6921/MSMEI_6732 from Mycolicibacterium smegmatis (strain ATCC 700084 / mc(2)155) (Mycobacterium smegmatis).